The primary structure comprises 224 residues: uncharacterized protein (224 aa).

It localises to the virion. This is an uncharacterized protein from Acanthamoeba polyphaga mimivirus (APMV).